The sequence spans 336 residues: Fructose-1,6-bisphosphatase class 1 (336 aa).

Mg(2+) is bound by residues Glu-92, Asp-115, Leu-117, and Asp-118. Residues 118 to 121 (DGSS), Asn-211, Tyr-244, 262 to 264 (YLY), and Lys-274 contribute to the substrate site. Glu-280 is a binding site for Mg(2+).

Belongs to the FBPase class 1 family. In terms of assembly, homotetramer. Requires Mg(2+) as cofactor.

It localises to the cytoplasm. It carries out the reaction beta-D-fructose 1,6-bisphosphate + H2O = beta-D-fructose 6-phosphate + phosphate. It functions in the pathway carbohydrate biosynthesis; gluconeogenesis. This Hahella chejuensis (strain KCTC 2396) protein is Fructose-1,6-bisphosphatase class 1.